Reading from the N-terminus, the 1012-residue chain is MSNNMNIDQTDQNTIDEGLYSRQLYVLGHEAMKQMSQSNVLIIGCKGLGVEIAKNVCLAGVKSVTLYDPQPTRIEDLSSQYFLTEDDIGVPRAKVTVSKLAELNQYVPVSVVDELSTEYLKNFKCVVVTETSLTKQLEINDFTHKNHIAYIAADSRGLFGSIFCDFGENFICTDTDGNEPLTGMIASITDDGVVTMLEETRHGLENGDFVKFTEVKGMPGLNDGTPRKVEVKGPYTFSIGSVKDLGSAGYNGVFTQVKVPTKISFKSLRESLKDPEYVYPDFGKMMRPPQYHIAFQALSAFADAHEGSLPRPRNDIDAAEFFEFCKKIASTLQFDVELDEKLIKEISYQARGDLVAMSAFLGGAVAQEVLKATTSKFYPLKQYFYFDSLESLPSSVTISEETCKPRGCRYDGQIAVFGSEFQEKIASLSTFLVGAGAIGCEMLKNWAMMGVATGESGHISVTDMDSIEKSNLNRQFLFRPRDVGKLKSECASTAVSIMNPSLTGKITSYQERVGPESEGIFGDEFFEKLSLVTNALDNVEARMYVDRRCVFFEKPLLESGTLGTKGNTQVVVPHLTESYGSSQDPPEKSFPICTLKNFPNRIEHTIAWARDLFEGLFKQPIDNVNMYLSSPNFLETSLKTSSNPREVLENIRDYLVTEKPLSFEECIMWARLQFDKFFNNNIQQLLFNFPKDSVTSTGQPFWSGPKRAPTPLSFDIHNREHFDFIVAAASLYAFNYGLKSETDPAIYERVLAGYNPPPFAPKSGIKIQVNENEEAPETAANKDKQELKSIADSLPPPSSLVGFRLTPAEFEKDDDSNHHIDFITAASNLRAMNYDITPADRFKTKFVAGKIVPAMCTSTAVVSGLVCLELVKLVDGKKKIEEYKNGFFNLAIGLFTFSDPIASPKMKVNGKEIDKIWDRYNLPDCTLQELIDYFQKEEGLEVTMLSSGVSLLYANFQPPKKLAERLPLKISELVEQITKKKLEPFRKHLVLEICCDDANGEDVEVPFICIKL.

Arg22 contributes to the ATP binding site. Ser264 is modified (phosphoserine). ATP contacts are provided by Ala437 and Asp463. Mg(2+) contacts are provided by Asp465 and Glu468. The ATP site is built by Asn471, Arg474, Lys487, Val513, Asp537, and Asn538. Mg(2+) is bound at residue Asp537. Lys588 is covalently cross-linked (Glycyl lysine isopeptide (Lys-Gly) (interchain with G-Cter in ubiquitin)). Cys593 acts as the Glycyl thioester intermediate in catalysis. At Ser903 the chain carries Phosphoserine.

The protein belongs to the ubiquitin-activating E1 family. In terms of assembly, monomer. Interacts with the E2 ubiquitin-conjugating enzyme ubc4.

The protein resides in the cytoplasm. The protein localises to the nucleus. The enzyme catalyses ATP + ubiquitin + [E1 ubiquitin-activating enzyme]-L-cysteine = AMP + diphosphate + S-ubiquitinyl-[E1 ubiquitin-activating enzyme]-L-cysteine.. The protein operates within protein modification; protein ubiquitination. Its activity is regulated as follows. Ubiquitin transfer between the E1 ubiquitin-activating enzyme ptr3 and E2 ubiquitin-conjugating enzyme ubc4 is enhanced by the presence of magnesium and ATP, or adenylated ubiquitin. E1 ubiquitin-activating enzyme that catalyzes the first step in ubiquitin conjugation to mark cellular proteins for degradation through the ubiquitin-proteasome system. Activates ubiquitin by first adenylating its C-terminal glycine residue with ATP, and thereafter linking this residue to the side chain of a cysteine residue in E1, yielding a ubiquitin-E1 thioester and free AMP. This Schizosaccharomyces pombe (strain 972 / ATCC 24843) (Fission yeast) protein is Ubiquitin-activating enzyme E1 1 (ptr3).